We begin with the raw amino-acid sequence, 480 residues long: GPI-anchored wall transfer protein 1 (480 aa).

Transmembrane regions (helical) follow at residues 20 to 40 (IAEI…WQLL), 47 to 67 (VPLV…ITVY), 70 to 90 (DPVL…QILG), 114 to 134 (PFIT…ILAV), 153 to 173 (LMDL…ASAL), 186 to 208 (WSRL…ARLV), 228 to 248 (FFFT…ICTY), 252 to 272 (VFIA…EGFL), 291 to 311 (ILSF…GFYV), 343 to 363 (WTSV…VALF), and 381 to 401 (LPYV…YCMV). Asparagine 406 carries an N-linked (GlcNAc...) asparagine glycan. Helical transmembrane passes span 426–446 (LFVF…MNTL) and 450–470 (LTVQ…VAII).

It belongs to the PIGW family.

The protein localises to the endoplasmic reticulum membrane. Its pathway is glycolipid biosynthesis; glycosylphosphatidylinositol-anchor biosynthesis. In terms of biological role, probable acetyltransferase, which acetylates the inositol ring of phosphatidylinositol during biosynthesis of GPI-anchor. The chain is GPI-anchored wall transfer protein 1 (GWT1) from Eremothecium gossypii (strain ATCC 10895 / CBS 109.51 / FGSC 9923 / NRRL Y-1056) (Yeast).